The chain runs to 280 residues: Ribosomal RNA small subunit methyltransferase A (280 aa).

Residues Asn-27, Leu-29, Gly-54, Glu-76, Asp-102, and Asn-122 each coordinate S-adenosyl-L-methionine.

It belongs to the class I-like SAM-binding methyltransferase superfamily. rRNA adenine N(6)-methyltransferase family. RsmA subfamily.

The protein resides in the cytoplasm. The enzyme catalyses adenosine(1518)/adenosine(1519) in 16S rRNA + 4 S-adenosyl-L-methionine = N(6)-dimethyladenosine(1518)/N(6)-dimethyladenosine(1519) in 16S rRNA + 4 S-adenosyl-L-homocysteine + 4 H(+). Specifically dimethylates two adjacent adenosines (A1518 and A1519) in the loop of a conserved hairpin near the 3'-end of 16S rRNA in the 30S particle. May play a critical role in biogenesis of 30S subunits. The protein is Ribosomal RNA small subunit methyltransferase A of Oleidesulfovibrio alaskensis (strain ATCC BAA-1058 / DSM 17464 / G20) (Desulfovibrio alaskensis).